We begin with the raw amino-acid sequence, 163 residues long: MPSFDIVSEIDMQEVRNAVENATRELSTRWDFRNVPASFELNEKSQSIKATSESDFQVQQLIDIMREKLLKRGIEGGALEVPEEFEHSGKTYSVEAKLKQGIETTQAKKIVKLIKDSKLKVQAQIQGEQVRVTGKSRDDLQGVMALIRGGNLGQPFQFTNFRD.

Belongs to the YajQ family.

Functionally, nucleotide-binding protein. This Pectobacterium carotovorum subsp. carotovorum (strain PC1) protein is Nucleotide-binding protein PC1_1036.